A 122-amino-acid chain; its full sequence is MIQQESRMRVADNTGAKELLCIRVLGGTKRRYASVGDTIIATVKQANPGGSAKKGEVVRAVIVRVKKGYTRPDGSMIQFDDNAAVIINQQGNPRGTRIFGPVARELREKQYMKIISLAPEVL.

Belongs to the universal ribosomal protein uL14 family. Part of the 50S ribosomal subunit. Forms a cluster with proteins L3 and L19. In the 70S ribosome, L14 and L19 interact and together make contacts with the 16S rRNA in bridges B5 and B8.

Binds to 23S rRNA. Forms part of two intersubunit bridges in the 70S ribosome. The chain is Large ribosomal subunit protein uL14 from Herpetosiphon aurantiacus (strain ATCC 23779 / DSM 785 / 114-95).